A 137-amino-acid polypeptide reads, in one-letter code: ATP synthase epsilon chain, chloroplastic (137 aa).

The protein belongs to the ATPase epsilon chain family. F-type ATPases have 2 components, CF(1) - the catalytic core - and CF(0) - the membrane proton channel. CF(1) has five subunits: alpha(3), beta(3), gamma(1), delta(1), epsilon(1). CF(0) has three main subunits: a, b and c.

The protein localises to the plastid. The protein resides in the chloroplast thylakoid membrane. Functionally, produces ATP from ADP in the presence of a proton gradient across the membrane. In Pinus thunbergii (Japanese black pine), this protein is ATP synthase epsilon chain, chloroplastic.